Here is a 118-residue protein sequence, read N- to C-terminus: Large ribosomal subunit protein bL19 (118 aa).

It belongs to the bacterial ribosomal protein bL19 family.

This protein is located at the 30S-50S ribosomal subunit interface and may play a role in the structure and function of the aminoacyl-tRNA binding site. The chain is Large ribosomal subunit protein bL19 from Nautilia profundicola (strain ATCC BAA-1463 / DSM 18972 / AmH).